The primary structure comprises 1047 residues: Ubiquitin carboxyl-terminal hydrolase 48 (1047 aa).

The USP domain maps to 89–416 (VGLTNLGATC…NAYMLVYKQQ (328 aa)). The active-site Nucleophile is cysteine 98. Catalysis depends on histidine 348, which acts as the Proton acceptor. DUSP domains are found at residues 457–551 (QSVD…RSSL), 567–697 (NQLN…DHDP), and 717–830 (MMAN…RIHD). The tract at residues 609–647 (LEEDEEETKHNNSKINGEKSSPGTKADGVKGDSEDGDGE) is disordered. Positions 621–631 (SKINGEKSSPG) are enriched in polar residues. Basic and acidic residues predominate over residues 635 to 647 (DGVKGDSEDGDGE). The disordered stretch occupies residues 887–928 (PEFSVSGSDVEDEKEEPKLDGEKDPDFSQTEGGAKRQKLNDT). Residues 901-912 (EEPKLDGEKDPD) are compositionally biased toward basic and acidic residues. The Ubiquitin-like domain occupies 961–1012 (VSANQTLKDLKIQIMHAFSVAPFDQNLSIDGRCLKDDSATLGSLGVIPESII).

Belongs to the peptidase C19 family.

The protein resides in the cytoplasm. It is found in the nucleus. The catalysed reaction is Thiol-dependent hydrolysis of ester, thioester, amide, peptide and isopeptide bonds formed by the C-terminal Gly of ubiquitin (a 76-residue protein attached to proteins as an intracellular targeting signal).. Functionally, recognizes and hydrolyzes the peptide bond at the C-terminal Gly of ubiquitin. Involved in the processing of poly-ubiquitin precursors as well as that of ubiquitinated proteins. The chain is Ubiquitin carboxyl-terminal hydrolase 48 (usp48) from Danio rerio (Zebrafish).